Reading from the N-terminus, the 620-residue chain is Glutathione-regulated potassium-efflux system protein KefC (620 aa).

12 consecutive transmembrane segments (helical) span residues 4–24 (HTLI…PIAV), 26–46 (LGLG…PWGL), 54–74 (SILH…GLEL), 90–110 (GALQ…FLGL), 114–134 (VAEL…MQAM), 149–169 (FAVL…IPLL), 178–198 (MGAF…VVLL), 218–238 (VFSA…EEVG), 270–290 (GLLL…GTLL), 294–314 (LRIV…LWLI), 327–347 (WFAV…GAAQ), and 359–379 (SLTL…VILN). Residues 399–518 (QPRVIIAGFG…AGVEKPERET (120 aa)) form the RCK N-terminal domain. The segment at 597 to 620 (GWQGTEEGKHTGNMADEPETKPSS) is disordered.

This sequence belongs to the monovalent cation:proton antiporter 2 (CPA2) transporter (TC 2.A.37) family. KefC subfamily. Homodimer. Interacts with the regulatory subunit KefF.

The protein resides in the cell inner membrane. Pore-forming subunit of a potassium efflux system that confers protection against electrophiles. Catalyzes K(+)/H(+) antiport. In Escherichia fergusonii (strain ATCC 35469 / DSM 13698 / CCUG 18766 / IAM 14443 / JCM 21226 / LMG 7866 / NBRC 102419 / NCTC 12128 / CDC 0568-73), this protein is Glutathione-regulated potassium-efflux system protein KefC.